We begin with the raw amino-acid sequence, 423 residues long: Gamma-glutamyl phosphate reductase (423 aa).

Belongs to the gamma-glutamyl phosphate reductase family.

Its subcellular location is the cytoplasm. It catalyses the reaction L-glutamate 5-semialdehyde + phosphate + NADP(+) = L-glutamyl 5-phosphate + NADPH + H(+). The protein operates within amino-acid biosynthesis; L-proline biosynthesis; L-glutamate 5-semialdehyde from L-glutamate: step 2/2. In terms of biological role, catalyzes the NADPH-dependent reduction of L-glutamate 5-phosphate into L-glutamate 5-semialdehyde and phosphate. The product spontaneously undergoes cyclization to form 1-pyrroline-5-carboxylate. The polypeptide is Gamma-glutamyl phosphate reductase (Paraburkholderia phytofirmans (strain DSM 17436 / LMG 22146 / PsJN) (Burkholderia phytofirmans)).